Here is a 95-residue protein sequence, read N- to C-terminus: MKDEIIREVYDTLVDRKNNPIDSYTSKLMQDSDKKAEDKILEKLGEEATEVILASKNNEDLVHESADLIFFTILNLAYKGIPLDDVFDELISRHN.

Belongs to the PRA-PH family.

The protein resides in the cytoplasm. It catalyses the reaction 1-(5-phospho-beta-D-ribosyl)-ATP + H2O = 1-(5-phospho-beta-D-ribosyl)-5'-AMP + diphosphate + H(+). Its pathway is amino-acid biosynthesis; L-histidine biosynthesis; L-histidine from 5-phospho-alpha-D-ribose 1-diphosphate: step 2/9. The polypeptide is Phosphoribosyl-ATP pyrophosphatase (Methanosphaera stadtmanae (strain ATCC 43021 / DSM 3091 / JCM 11832 / MCB-3)).